The sequence spans 961 residues: Autophagy-related protein 9 (961 aa).

Disordered regions lie at residues 1-91, 126-180, 198-225, and 244-265; these read MGDS…IKAN, KVGQ…SVNF, KDSKSNGEASNKMFTSSNQGNHNYKYRN, and SLFGSHEAGGHKSHNSAPSKGP. The Cytoplasmic portion of the chain corresponds to 1 to 324; the sequence is MGDSESVNQD…SGFSCIVLRK (324 aa). Residues 132–160 show a composition bias toward acidic residues; sequence SDEEDDGSLSNEEEDIDEEDEIDEIDADE. Residues 203–219 are compositionally biased toward polar residues; it reads NGEASNKMFTSSNQGNH. The helical transmembrane segment at 325–345 threads the bilayer; sequence LLNLTTLIFVVYISTYLGYCI. Over 346–374 the chain is Lumenal; the sequence is DYSKLPTSSRLSDIIIDQCYTTRITGITK. The chain crosses the membrane as a helical span at residues 375 to 395; it reads GLLWVFYVFVGLKVVQFYFDL. Residues 396–536 are Cytoplasmic-facing; sequence QNLTDMHNFY…EELRKRFMLA (141 aa). Residues 537-557 lie within the membrane without spanning it; that stretch reads GFLNIILSPFLVTYFVLLYFL. At 558–617 the chain is on the cytoplasmic side; sequence RYFNEFKTSPGTIGARQYTPMAEWTFREFNELYHIFQKRLGLSTVIADKYINQFPKESTD. Residues 618-638 traverse the membrane as a helical segment; it reads LILKFISFISGSFVAVLMSLT. The Lumenal segment spans residues 639-654; the sequence is LLDSENFLNFEVTKDR. Residues 655–675 traverse the membrane as a helical segment; that stretch reads SVLFYITVFGAIWSVCRNSIS. At 676 to 721 the chain is on the cytoplasmic side; that stretch reads DEYKVYDPDETIKELSEFTHYLPKEWEGKHHTEDVKQEFCKLYNIR. The stretch at 722-742 is an intramembrane region; that stretch reads LIILLRELASLVLTPFILWFS. The Cytoplasmic segment spans residues 743-961; sequence LPACSDRIVD…DYYKTSDIGR (219 aa). Over residues 900-918 the composition is skewed to polar residues; that stretch reads GKKSTLNSENPYDNSSNLG. Residues 900 to 940 form a disordered region; that stretch reads GKKSTLNSENPYDNSSNLGESFINPTIMPDRDLGRNGVNGG.

The protein belongs to the ATG9 family. As to quaternary structure, homotrimer; forms a homotrimer with a central pore that forms a path between the two membrane leaflets. In terms of processing, phosphorylated by ATG1. ATG1 phosphorylation is required for preautophagosome elongation.

It localises to the preautophagosomal structure membrane. Its subcellular location is the cytoplasmic vesicle membrane. The protein localises to the golgi apparatus membrane. It is found in the endoplasmic reticulum membrane. It carries out the reaction a 1,2-diacyl-sn-glycero-3-phosphocholine(in) = a 1,2-diacyl-sn-glycero-3-phosphocholine(out). The enzyme catalyses a 1,2-diacyl-sn-glycero-3-phospho-L-serine(in) = a 1,2-diacyl-sn-glycero-3-phospho-L-serine(out). The catalysed reaction is a 1,2-diacyl-sn-glycero-3-phosphoethanolamine(in) = a 1,2-diacyl-sn-glycero-3-phosphoethanolamine(out). It catalyses the reaction a 1,2-diacyl-sn-glycero-3-phospho-(1D-myo-inositol-3-phosphate)(in) = a 1,2-diacyl-sn-glycero-3-phospho-(1D-myo-inositol-3-phosphate)(out). Phospholipid scramblase involved in autophagy and cytoplasm to vacuole transport (Cvt) vesicle formation. Cycles between the preautophagosomal structure/phagophore assembly site (PAS) and the cytoplasmic vesicle pool and supplies membrane for the growing autophagosome. Lipid scramblase activity plays a key role in preautophagosomal structure/phagophore assembly by distributing the phospholipids that arrive through ATG2 from the cytoplasmic to the luminal leaflet of the bilayer, thereby driving autophagosomal membrane expansion. Required for mitophagy. Also involved in endoplasmic reticulum-specific autophagic process and is essential for the survival of cells subjected to severe ER stress. Different machineries are required for anterograde trafficking to the PAS during either the Cvt pathway or bulk autophagy and for retrograde trafficking. This Vanderwaltozyma polyspora (strain ATCC 22028 / DSM 70294 / BCRC 21397 / CBS 2163 / NBRC 10782 / NRRL Y-8283 / UCD 57-17) (Kluyveromyces polysporus) protein is Autophagy-related protein 9 (ATG9).